Consider the following 61-residue polypeptide: Large ribosomal subunit protein uL30 (61 aa).

The protein belongs to the universal ribosomal protein uL30 family. In terms of assembly, part of the 50S ribosomal subunit.

In Neisseria meningitidis serogroup C (strain 053442), this protein is Large ribosomal subunit protein uL30.